Consider the following 159-residue polypeptide: Cytochrome c-type biogenesis protein CcmE (159 aa).

The Cytoplasmic segment spans residues M1–R7. A helical; Signal-anchor for type II membrane protein membrane pass occupies residues L8–A28. The Periplasmic segment spans residues F29–R159. Positions 123 and 127 each coordinate heme.

Belongs to the CcmE/CycJ family.

It localises to the cell inner membrane. In terms of biological role, heme chaperone required for the biogenesis of c-type cytochromes. Transiently binds heme delivered by CcmC and transfers the heme to apo-cytochromes in a process facilitated by CcmF and CcmH. The sequence is that of Cytochrome c-type biogenesis protein CcmE from Cupriavidus pinatubonensis (strain JMP 134 / LMG 1197) (Cupriavidus necator (strain JMP 134)).